Here is a 527-residue protein sequence, read N- to C-terminus: RUS family member 1 (527 aa).

The N-linked (GlcNAc...) asparagine glycan is linked to Asn21. The chain crosses the membrane as a helical span at residues Ser220–Ile240. Asn243 carries an N-linked (GlcNAc...) asparagine glycan. The helical transmembrane segment at Ser245–Tyr265 threads the bilayer. N-linked (GlcNAc...) asparagine glycosylation is present at Asn346. The disordered stretch occupies residues Thr350–Lys426. N-linked (GlcNAc...) asparagine glycans are attached at residues Asn467 and Asn497.

It belongs to the RUS1 family.

The protein resides in the membrane. This chain is RUS family member 1 (rusf1), found in Dictyostelium discoideum (Social amoeba).